The chain runs to 83 residues: Mu-theraphotoxin-Hhn2j 4 (83 aa).

Positions 1 to 21 are cleaved as a signal peptide; sequence MKASMFLALAGLVLLFVVGYA. The propeptide occupies 22-48; it reads SESEEKEFPIELLSKIFAVDVFKGEGR. 3 disulfides stabilise this stretch: C50/C65, C57/C70, and C64/C77. The residue at position 81 (L81) is a Leucine amide.

It belongs to the neurotoxin 10 (Hwtx-1) family. 15 (Hntx-3) subfamily. As to quaternary structure, monomer. Expressed by the venom gland.

The protein resides in the secreted. Its function is as follows. Lethal neurotoxin. Selectively blocks tetrodotoxin-sensitive voltage-gated sodium channels (Nav). Does not affect tetrodotoxin-resistant voltage-gated sodium channels or calcium channels. In Cyriopagopus hainanus (Chinese bird spider), this protein is Mu-theraphotoxin-Hhn2j 4.